We begin with the raw amino-acid sequence, 885 residues long: Alanine--tRNA ligase (885 aa).

Histidine 572, histidine 576, cysteine 675, and histidine 679 together coordinate Zn(2+).

The protein belongs to the class-II aminoacyl-tRNA synthetase family. Zn(2+) serves as cofactor.

Its subcellular location is the cytoplasm. The catalysed reaction is tRNA(Ala) + L-alanine + ATP = L-alanyl-tRNA(Ala) + AMP + diphosphate. Catalyzes the attachment of alanine to tRNA(Ala) in a two-step reaction: alanine is first activated by ATP to form Ala-AMP and then transferred to the acceptor end of tRNA(Ala). Also edits incorrectly charged Ser-tRNA(Ala) and Gly-tRNA(Ala) via its editing domain. The protein is Alanine--tRNA ligase of Leifsonia xyli subsp. xyli (strain CTCB07).